The primary structure comprises 469 residues: uncharacterized protein (469 aa).

The next 3 helical transmembrane spans lie at 42–62 (DVIIFLLLFFVAFNVSSAYVI), 179–199 (IVLPPGAVILSPQGTLLVTPS), and 249–269 (NLKYLLIIAIFGTAIFGGLFV).

The protein localises to the cell membrane. This is an uncharacterized protein from Methanocaldococcus jannaschii (strain ATCC 43067 / DSM 2661 / JAL-1 / JCM 10045 / NBRC 100440) (Methanococcus jannaschii).